The sequence spans 395 residues: S-adenosylmethionine synthase (395 aa).

An ATP-binding site is contributed by histidine 16. Aspartate 18 is a Mg(2+) binding site. Glutamate 44 provides a ligand contact to K(+). Positions 57 and 100 each coordinate L-methionine. Residues 100 to 110 (QSPDIAGGVNL) are flexible loop. Residues 175-177 (DGK), 242-243 (RF), aspartate 251, 257-258 (RK), alanine 274, and lysine 278 each bind ATP. Residue aspartate 251 coordinates L-methionine. Lysine 282 contacts L-methionine.

This sequence belongs to the AdoMet synthase family. As to quaternary structure, homotetramer; dimer of dimers. Mg(2+) is required as a cofactor. K(+) serves as cofactor.

It localises to the cytoplasm. The catalysed reaction is L-methionine + ATP + H2O = S-adenosyl-L-methionine + phosphate + diphosphate. It functions in the pathway amino-acid biosynthesis; S-adenosyl-L-methionine biosynthesis; S-adenosyl-L-methionine from L-methionine: step 1/1. Functionally, catalyzes the formation of S-adenosylmethionine (AdoMet) from methionine and ATP. The overall synthetic reaction is composed of two sequential steps, AdoMet formation and the subsequent tripolyphosphate hydrolysis which occurs prior to release of AdoMet from the enzyme. In Thermus thermophilus (strain ATCC BAA-163 / DSM 7039 / HB27), this protein is S-adenosylmethionine synthase.